The chain runs to 232 residues: Flagellar L-ring protein (232 aa).

The N-terminal stretch at 1-21 is a signal peptide; sequence MQKNAAHTYAISSLLVLSLTG. C22 carries N-palmitoyl cysteine lipidation. C22 is lipidated: S-diacylglycerol cysteine.

The protein belongs to the FlgH family. In terms of assembly, the basal body constitutes a major portion of the flagellar organelle and consists of four rings (L,P,S, and M) mounted on a central rod.

The protein resides in the cell outer membrane. It is found in the bacterial flagellum basal body. Functionally, assembles around the rod to form the L-ring and probably protects the motor/basal body from shearing forces during rotation. This chain is Flagellar L-ring protein, found in Escherichia coli O6:H1 (strain CFT073 / ATCC 700928 / UPEC).